The chain runs to 367 residues: Homeobox protein Nkx-6.1 (367 aa).

The disordered stretch occupies residues Tyr-36–Ala-133. 3 stretches are compositionally biased toward low complexity: residues Pro-48 to Ser-59, Gly-78 to Ser-91, and Ala-110 to Ala-133. Positions Leu-102–Arg-268 are repressor domain. Arg-189 carries the asymmetric dimethylarginine modification. The homeobox DNA-binding region spans Arg-236 to His-295. The tract at residues Lys-294–Ser-367 is disordered. The segment covering Lys-304–Ser-317 has biased composition (basic and acidic residues). The involved in DNA-binding stretch occupies residues Gln-306–Ser-367.

In terms of tissue distribution, pancreatic beta cells.

The protein resides in the nucleus. Its function is as follows. Transcription factor which binds to specific A/T-rich DNA sequences in the promoter regions of a number of genes. Involved in the development of insulin-producing beta cells in the islets of Langerhans at the secondary transition. Together with NKX2-2 and IRX3 acts to restrict the generation of motor neurons to the appropriate region of the neural tube. Belongs to the class II proteins of neuronal progenitor factors, which are induced by SHH signals. This chain is Homeobox protein Nkx-6.1 (NKX6-1), found in Homo sapiens (Human).